Here is a 492-residue protein sequence, read N- to C-terminus: MADAPPTDEGWFVLHDCYTVDWDAWRDAPERDRTAALDDAASFLADREALADADEGESGVFSITGQKADLLFVHFRESLDELDRIQRAFEQTAFAEYTERAHSYVSVVEISGYTAPDYFEDPDSVDDGLRQYFESKLTPEIPDDTYVSFYPMSKRRQPEQNWYDLPIEERAEMMDVHGDLGKQYAGKVSQVIASSVGLDDMEWGVTLFADDLTDIKDIVYEMRFDEVSAKYGAFGDFFVGRRFPPADLPAFMAGERVPAPEGGADAHGEGERTHHHGDSDHHDGDDGEQHHHSTGDEADDGIRGELADEDIYAGQPHGEDVYATVLYSEAGADDLFEEVEGLRGNFEHYDTHVKTAVYDGHEADRRAVVSIWDTASAADTAAGFLADLPEVVERAGEESGFGTMGMFYETKPEHTAEFVEKFDTVAGVLADMDGHFDTDLMVNVENDDDMFIASQWRSQEDAMAFFRSDDFGDTVDWGRDVLADRPRHVFLA.

Histidine 177 contacts heme. The segment at alanine 253–glycine 301 is disordered. Basic and acidic residues predominate over residues alanine 264–glycine 301. The region spanning glycine 402–phenylalanine 490 is the ABM domain.

The protein in the N-terminal section; belongs to the ChdC family.

This Halobacterium salinarum (strain ATCC 700922 / JCM 11081 / NRC-1) (Halobacterium halobium) protein is Putative heme-binding protein VNG_2021C.